Reading from the N-terminus, the 459-residue chain is Bifunctional protein GlmU (459 aa).

The pyrophosphorylase stretch occupies residues 1–230 (MVKRYAVILA…FEETIGVNDR (230 aa)). UDP-N-acetyl-alpha-D-glucosamine is bound by residues 9 to 12 (LAAG), Lys23, Gln73, and 78 to 79 (GT). Residue Asp103 participates in Mg(2+) binding. UDP-N-acetyl-alpha-D-glucosamine is bound by residues Gly140, Glu155, Asn170, and Asn228. Asn228 contributes to the Mg(2+) binding site. A linker region spans residues 231-251 (VALAEAEKIMRERICRKHMMN). Residues 252 to 459 (GVTIIDPAHT…VDRLSIKKNS (208 aa)) are N-acetyltransferase. The UDP-N-acetyl-alpha-D-glucosamine site is built by Arg333 and Lys351. The active-site Proton acceptor is His363. Residues Tyr366 and Asn377 each coordinate UDP-N-acetyl-alpha-D-glucosamine. Residues 386–387 (NY), Ala423, and Arg440 contribute to the acetyl-CoA site.

The protein in the N-terminal section; belongs to the N-acetylglucosamine-1-phosphate uridyltransferase family. It in the C-terminal section; belongs to the transferase hexapeptide repeat family. Homotrimer. Mg(2+) is required as a cofactor.

The protein localises to the cytoplasm. It carries out the reaction alpha-D-glucosamine 1-phosphate + acetyl-CoA = N-acetyl-alpha-D-glucosamine 1-phosphate + CoA + H(+). The catalysed reaction is N-acetyl-alpha-D-glucosamine 1-phosphate + UTP + H(+) = UDP-N-acetyl-alpha-D-glucosamine + diphosphate. The protein operates within nucleotide-sugar biosynthesis; UDP-N-acetyl-alpha-D-glucosamine biosynthesis; N-acetyl-alpha-D-glucosamine 1-phosphate from alpha-D-glucosamine 6-phosphate (route II): step 2/2. Its pathway is nucleotide-sugar biosynthesis; UDP-N-acetyl-alpha-D-glucosamine biosynthesis; UDP-N-acetyl-alpha-D-glucosamine from N-acetyl-alpha-D-glucosamine 1-phosphate: step 1/1. It participates in bacterial outer membrane biogenesis; LPS lipid A biosynthesis. Catalyzes the last two sequential reactions in the de novo biosynthetic pathway for UDP-N-acetylglucosamine (UDP-GlcNAc). The C-terminal domain catalyzes the transfer of acetyl group from acetyl coenzyme A to glucosamine-1-phosphate (GlcN-1-P) to produce N-acetylglucosamine-1-phosphate (GlcNAc-1-P), which is converted into UDP-GlcNAc by the transfer of uridine 5-monophosphate (from uridine 5-triphosphate), a reaction catalyzed by the N-terminal domain. This Geobacillus sp. (strain WCH70) protein is Bifunctional protein GlmU.